Reading from the N-terminus, the 506-residue chain is Asparagine--tRNA ligase (506 aa).

Belongs to the class-II aminoacyl-tRNA synthetase family. In terms of assembly, homodimer.

It localises to the cytoplasm. It catalyses the reaction tRNA(Asn) + L-asparagine + ATP = L-asparaginyl-tRNA(Asn) + AMP + diphosphate + H(+). The protein is Asparagine--tRNA ligase of Onion yellows phytoplasma (strain OY-M).